Consider the following 438-residue polypeptide: MLTILGFSMVTVFTILIMTKKVSPIVALTITPIVFALIGGFGKGIGDMILEGIQTVASSAALLLFAILFFGILIDAGLFDPLIEKILSIVKGDPVKIAIGSAVLAMLIALDGDGTTTYMITVSAMLPLYKRIGMNPMVMATLAMLSLSIVSGMTPWGGPATRAISVLGLDPSDFFVPLLPTMLGGIACVIFLAFLMGRKERNRIGIVQLEPRHITKDSSQSYMAATLESEQLKRPRLIYLNLFLVISIMVFIVLGTKHPSVLFLIGFVLALTINYPNVKMQKERIAEHSGNAITVVLLVFSAGVFAGILSGTKMVDAIAGSLISIIPSSMGGFFPVIVALTSIPFTFVLSNDAYYFGMVPIFAEAASAYGIEPVEIARASIMGQPVHLMSPLVASTVLLVSMLKMDLGSFQRFAVKWAVITSLVITLLAIITGAITIL.

A run of 12 helical transmembrane segments spans residues 22–42, 59–79, 89–109, 137–157, 174–194, 237–257, 258–278, 292–312, 330–350, 356–376, 380–400, and 418–438; these read VSPIVALTITPIVFALIGGFG, SAALLLFAILFFGILIDAGLF, IVKGDPVKIAIGSAVLAMLIA, MVMATLAMLSLSIVSGMTPWG, FFVPLLPTMLGGIACVIFLAF, LIYLNLFLVISIMVFIVLGTK, HPSVLFLIGFVLALTINYPNV, AITVVLLVFSAGVFAGILSGT, MGGFFPVIVALTSIPFTFVLS, FGMVPIFAEAASAYGIEPVEI, SIMGQPVHLMSPLVASTVLLV, and AVITSLVITLLAIITGAITIL.

This sequence belongs to the CitM (TC 2.A.11) transporter family.

It is found in the cell membrane. Its function is as follows. Transports the free citrate anion. This is an uncharacterized protein from Bacillus subtilis (strain 168).